We begin with the raw amino-acid sequence, 763 residues long: Protein translocase subunit SecA 2 (763 aa).

ATP contacts are provided by residues Gln83, 101–105 (GEGKT), and Asp490.

The protein belongs to the SecA family. Monomer and homodimer. Part of the essential Sec protein translocation apparatus which comprises SecA, SecYEG and auxiliary proteins SecDF. Other proteins may also be involved.

Its subcellular location is the cell membrane. The protein localises to the cytoplasm. It carries out the reaction ATP + H2O + cellular proteinSide 1 = ADP + phosphate + cellular proteinSide 2.. In terms of biological role, part of the Sec protein translocase complex. Interacts with the SecYEG preprotein conducting channel. Has a central role in coupling the hydrolysis of ATP to the transfer of proteins into and across the cell membrane, serving as an ATP-driven molecular motor driving the stepwise translocation of polypeptide chains across the membrane. The sequence is that of Protein translocase subunit SecA 2 from Corynebacterium glutamicum (strain ATCC 13032 / DSM 20300 / JCM 1318 / BCRC 11384 / CCUG 27702 / LMG 3730 / NBRC 12168 / NCIMB 10025 / NRRL B-2784 / 534).